A 660-amino-acid polypeptide reads, in one-letter code: UvrABC system protein B (660 aa).

In terms of domain architecture, Helicase ATP-binding spans 26-196; it reads DGIDEKKEHQ…ELNKGQFDVK (171 aa). 39–46 contacts ATP; sequence GVTGSGKT. The short motif at 92 to 115 is the Beta-hairpin element; it reads YFDFYKPEAYIPKSDLYIEKTSKN. One can recognise a Helicase C-terminal domain in the interval 431–593; that stretch reads QIEDIYDHLK…IIPKTIVKPI (163 aa). The UVR domain maps to 622-657; that stretch reads KKFIDQMVRKMTQLAKANKFEEAIEIRDYLIEIGIE.

It belongs to the UvrB family. As to quaternary structure, forms a heterotetramer with UvrA during the search for lesions. Interacts with UvrC in an incision complex.

The protein resides in the cytoplasm. The UvrABC repair system catalyzes the recognition and processing of DNA lesions. A damage recognition complex composed of 2 UvrA and 2 UvrB subunits scans DNA for abnormalities. Upon binding of the UvrA(2)B(2) complex to a putative damaged site, the DNA wraps around one UvrB monomer. DNA wrap is dependent on ATP binding by UvrB and probably causes local melting of the DNA helix, facilitating insertion of UvrB beta-hairpin between the DNA strands. Then UvrB probes one DNA strand for the presence of a lesion. If a lesion is found the UvrA subunits dissociate and the UvrB-DNA preincision complex is formed. This complex is subsequently bound by UvrC and the second UvrB is released. If no lesion is found, the DNA wraps around the other UvrB subunit that will check the other stand for damage. The protein is UvrABC system protein B of Metamycoplasma arthritidis (strain 158L3-1) (Mycoplasma arthritidis).